The chain runs to 81 residues: Beta-toxin Ct13 (81 aa).

The first 18 residues, 1–18, serve as a signal peptide directing secretion; it reads MKVLILIIASVLLIGVEC. The 60-residue stretch at 19-78 folds into the LCN-type CS-alpha/beta domain; it reads KDGFPVDSEGCILLPCATRAYCSVNCKFMKGSGGSCDTLACHCKGLPEDAKVQDKPTNKC. 4 cysteine pairs are disulfide-bonded: Cys29–Cys78, Cys34–Cys54, Cys40–Cys59, and Cys44–Cys61. Cysteine amide is present on Cys78.

This sequence belongs to the long (4 C-C) scorpion toxin superfamily. Sodium channel inhibitor family. Beta subfamily. As to expression, expressed by the venom gland.

It localises to the secreted. Functionally, beta toxins bind voltage-independently at site-4 of sodium channels (Nav) and shift the voltage of activation toward more negative potentials thereby affecting sodium channel activation and promoting spontaneous and repetitive firing. The sequence is that of Beta-toxin Ct13 from Centruroides tecomanus (Scorpion).